Consider the following 316-residue polypeptide: Glycine--tRNA ligase alpha subunit (316 aa).

The protein belongs to the class-II aminoacyl-tRNA synthetase family. In terms of assembly, tetramer of two alpha and two beta subunits.

The protein localises to the cytoplasm. It carries out the reaction tRNA(Gly) + glycine + ATP = glycyl-tRNA(Gly) + AMP + diphosphate. In Cupriavidus taiwanensis (strain DSM 17343 / BCRC 17206 / CCUG 44338 / CIP 107171 / LMG 19424 / R1) (Ralstonia taiwanensis (strain LMG 19424)), this protein is Glycine--tRNA ligase alpha subunit.